The chain runs to 189 residues: Peptidyl-tRNA hydrolase (189 aa).

Y15 is a tRNA binding site. The active-site Proton acceptor is the H20. Residues F66, N68, and N114 each contribute to the tRNA site.

It belongs to the PTH family. In terms of assembly, monomer.

It localises to the cytoplasm. The catalysed reaction is an N-acyl-L-alpha-aminoacyl-tRNA + H2O = an N-acyl-L-amino acid + a tRNA + H(+). In terms of biological role, hydrolyzes ribosome-free peptidyl-tRNAs (with 1 or more amino acids incorporated), which drop off the ribosome during protein synthesis, or as a result of ribosome stalling. Functionally, catalyzes the release of premature peptidyl moieties from peptidyl-tRNA molecules trapped in stalled 50S ribosomal subunits, and thus maintains levels of free tRNAs and 50S ribosomes. The polypeptide is Peptidyl-tRNA hydrolase (Streptococcus pyogenes serotype M1).